A 265-amino-acid chain; its full sequence is 14-3-3-like protein GF14 nu (265 aa).

A phosphoserine mark is found at S67, S109, and S190. T211 is subject to Phosphothreonine. Positions 242-265 (AGGDEIKEASKHEPEEGKPAETGQ) are disordered. Residues 245–265 (DEIKEASKHEPEEGKPAETGQ) are compositionally biased toward basic and acidic residues.

This sequence belongs to the 14-3-3 family. Component of the SERK1 signaling complex, composed of KAPP, CDC48A, GRF6 or GRF7, SERK1, SERK2, SERK3/BAK1 and BRI1. Interacts with DREB1A and DREB1B in the nucleus. Interacts with CINV1.

The protein localises to the nucleus. Its subcellular location is the cytoplasm. In terms of biological role, is associated with a DNA binding complex that binds to the G box, a well-characterized cis-acting DNA regulatory element found in plant genes. The sequence is that of 14-3-3-like protein GF14 nu (GRF7) from Arabidopsis thaliana (Mouse-ear cress).